We begin with the raw amino-acid sequence, 395 residues long: Selection and upkeep of intraepithelial T-cells protein 7 (395 aa).

A signal peptide spans 1 to 25 (MMKPEFFCFSGFCVYFLFLQVVVSS). The 116-residue stretch at 26–141 (EKLRVTTPTR…DAAIMNLNVT (116 aa)) folds into the Ig-like V-type domain. At 26-248 (EKLRVTTPTR…FNRDRIWMES (223 aa)) the chain is on the extracellular side. An intrachain disulfide couples cysteine 49 to cysteine 123. Residues asparagine 92 and asparagine 139 are each glycosylated (N-linked (GlcNAc...) asparagine). The Ig-like C1-type domain occupies 142 to 233 (AVGLETEIHV…TGEEKQTSII (92 aa)). The cysteines at positions 163 and 217 are disulfide-linked. A helical membrane pass occupies residues 249 to 269 (LASIVWIMLSVYILYIICFYW). Over 270–287 (RTGCASGCLSKCFCVVTS) the chain is Cytoplasmic. A helical membrane pass occupies residues 288–308 (WPVQIVHLLFCTGTFFAIYLP). Residues 309 to 329 (HRSRVSLSDPQFPLYNNWITE) are Extracellular-facing. Residues 330 to 350 (LLFVILFLTICFALPIILLFI) form a helical membrane-spanning segment. The Cytoplasmic segment spans residues 351–395 (QFQFTSLTKWEKNKDGIMDQPRLGKAHETSSLYRKKTGKSWEQEK). The disordered stretch occupies residues 371–395 (PRLGKAHETSSLYRKKTGKSWEQEK).

This sequence belongs to the SKINT family. Expressed in skin, thymus, testis and, to a lower extent, bladder.

Its subcellular location is the membrane. May act by engaging a cell surface molecule on immature T-cells in the embryonic thymus. This chain is Selection and upkeep of intraepithelial T-cells protein 7 (Skint7), found in Mus musculus (Mouse).